A 65-amino-acid chain; its full sequence is Trypsin inhibitor 1 (65 aa).

Disulfide bonds link Cys39-Cys56, Cys46-Cys58, and Cys52-Cys64.

It belongs to the protease inhibitor I7 (squash-type serine protease inhibitor) family.

The protein localises to the secreted. Functionally, inhibits trypsin. This is Trypsin inhibitor 1 from Trichosanthes kirilowii (Chinese snake gourd).